A 273-amino-acid chain; its full sequence is Bifunctional protein FolD (273 aa).

NADP(+) contacts are provided by residues 155–157 (GRS), S180, and T221.

It belongs to the tetrahydrofolate dehydrogenase/cyclohydrolase family. Homodimer.

It catalyses the reaction (6R)-5,10-methylene-5,6,7,8-tetrahydrofolate + NADP(+) = (6R)-5,10-methenyltetrahydrofolate + NADPH. The catalysed reaction is (6R)-5,10-methenyltetrahydrofolate + H2O = (6R)-10-formyltetrahydrofolate + H(+). It functions in the pathway one-carbon metabolism; tetrahydrofolate interconversion. In terms of biological role, catalyzes the oxidation of 5,10-methylenetetrahydrofolate to 5,10-methenyltetrahydrofolate and then the hydrolysis of 5,10-methenyltetrahydrofolate to 10-formyltetrahydrofolate. In Coprothermobacter proteolyticus (strain ATCC 35245 / DSM 5265 / OCM 4 / BT), this protein is Bifunctional protein FolD.